The chain runs to 103 residues: ATP synthase subunit c (103 aa).

The next 3 helical transmembrane spans lie at 3-23 (FLAL…VSGL), 30-50 (SIAG…IGMG), and 74-94 (MFIA…LALI).

It belongs to the ATPase C chain family. As to quaternary structure, F-type ATPases have 2 components, F(1) - the catalytic core - and F(0) - the membrane proton channel. F(1) has five subunits: alpha(3), beta(3), gamma(1), delta(1), epsilon(1). F(0) has three main subunits: a(1), b(2) and c(10-14). The alpha and beta chains form an alternating ring which encloses part of the gamma chain. F(1) is attached to F(0) by a central stalk formed by the gamma and epsilon chains, while a peripheral stalk is formed by the delta and b chains.

The protein localises to the cell inner membrane. Its function is as follows. F(1)F(0) ATP synthase produces ATP from ADP in the presence of a proton or sodium gradient. F-type ATPases consist of two structural domains, F(1) containing the extramembraneous catalytic core and F(0) containing the membrane proton channel, linked together by a central stalk and a peripheral stalk. During catalysis, ATP synthesis in the catalytic domain of F(1) is coupled via a rotary mechanism of the central stalk subunits to proton translocation. Key component of the F(0) channel; it plays a direct role in translocation across the membrane. A homomeric c-ring of between 10-14 subunits forms the central stalk rotor element with the F(1) delta and epsilon subunits. The protein is ATP synthase subunit c of Helicobacter hepaticus (strain ATCC 51449 / 3B1).